We begin with the raw amino-acid sequence, 147 residues long: Endoribonuclease YbeY (147 aa).

Positions 108, 112, and 118 each coordinate Zn(2+).

This sequence belongs to the endoribonuclease YbeY family. Zn(2+) is required as a cofactor.

Its subcellular location is the cytoplasm. Single strand-specific metallo-endoribonuclease involved in late-stage 70S ribosome quality control and in maturation of the 3' terminus of the 16S rRNA. This chain is Endoribonuclease YbeY, found in Sulfurovum sp. (strain NBC37-1).